The chain runs to 102 residues: Large ribosomal subunit protein uL24 (102 aa).

This sequence belongs to the universal ribosomal protein uL24 family. As to quaternary structure, part of the 50S ribosomal subunit.

One of two assembly initiator proteins, it binds directly to the 5'-end of the 23S rRNA, where it nucleates assembly of the 50S subunit. Its function is as follows. One of the proteins that surrounds the polypeptide exit tunnel on the outside of the subunit. The chain is Large ribosomal subunit protein uL24 from Ralstonia nicotianae (strain ATCC BAA-1114 / GMI1000) (Ralstonia solanacearum).